The sequence spans 139 residues: Transcription antitermination protein NusB (139 aa).

This sequence belongs to the NusB family.

Its function is as follows. Involved in transcription antitermination. Required for transcription of ribosomal RNA (rRNA) genes. Binds specifically to the boxA antiterminator sequence of the ribosomal RNA (rrn) operons. The chain is Transcription antitermination protein NusB from Enterobacter sp. (strain 638).